We begin with the raw amino-acid sequence, 961 residues long: Mitogen-activated protein kinase kinase kinase 13-A (961 aa).

The disordered stretch occupies residues 88 to 118; the sequence is LRDQDEPENTAPQGSSHSGDGGSYSGNEDIR. The region spanning 169-410 is the Protein kinase domain; that stretch reads ISELQWLGSG…FRQILMHLDI (242 aa). Residues 175-183 and Lys196 each bind ATP; that span reads LGSGAQGAV. Residue Asp280 is the Proton acceptor of the active site. 2 leucine-zipper regions span residues 434-455 and 487-508; these read VKKHFEKIKSEGTCIHRLDEEL and LSAIMLQLEVREKELIRREQAV. Residues 458–497 are a coiled coil; the sequence is RRREELRHALDIREHYERKLERANNLYMELSAIMLQLEVR. Disordered stretches follow at residues 513-600, 615-637, and 799-883; these read PGTY…SKGS, ALSQQSSQHQTLASPPVTSCSPY, and RRIR…KLDD. The segment covering 560–578 has biased composition (low complexity); that stretch reads SAEGSAASASPISGSPKTS. Basic residues predominate over residues 584–596; the sequence is NRYRSKPRHRRVN. A compositionally biased stretch (acidic residues) spans 810–823; sequence ESSEEEEGEVDSEV. An acidic region spans residues 811-824; sequence SSEEEEGEVDSEVE. Polar residues predominate over residues 837 to 851; the sequence is KCQSYSTFSSENFSV.

The protein belongs to the protein kinase superfamily. Ser/Thr protein kinase family.

It is found in the cytoplasm. The protein localises to the membrane. It catalyses the reaction L-seryl-[protein] + ATP = O-phospho-L-seryl-[protein] + ADP + H(+). The enzyme catalyses L-threonyl-[protein] + ATP = O-phospho-L-threonyl-[protein] + ADP + H(+). May have a role in the JNK signaling pathway. This is Mitogen-activated protein kinase kinase kinase 13-A (map3k13-a) from Xenopus laevis (African clawed frog).